Consider the following 864-residue polypeptide: MRLALLWALGLLGAGSPRPSPPLPNIGGTEEEQQASPERTLSGSMESRVVQDSPPMSLADVLQTGLPEALRISLELDSESHVLELLQNRDLIPGRPTLVWYQPDGTRMVSEGYSLENCCYRGRVQGHPSSWVSLCACSGIRGLIVLSPERGYTLELGPGDLQRPVISRIQDHLLLGHTCAPSWHASVPTRAGPDLLLEQHHAHRLKRDVVTETKIVELVIVADNSEVRKYPDFQQLLNRTLEAALLLDTFFQPLNVRVALVGLEAWTQHNLIEMSSNPAVLLDNFLRWRRTDLLPRLPHDSAQLVTVTSFSGPMVGMAIQNSICSPDFSGGVNMDHSTSILGVASSIAHELGHSLGLDHDSPGHSCPCPGPAPAKSCIMEASTDFLPGLNFSNCSRQALEKALLEGMGSCLFERQPSLAPMSSLCGNMFVDPGEQCDCGFPDECTDPCCDHFTCQLRPGAQCASDGPCCQNCKLHPAGWLCRPPTDDCDLPEFCPGDSSQCPSDIRLGDGEPCASGEAVCMHGRCASYARQCQSLWGPGAQPAAPLCLQTANTRGNAFGSCGRSPGGSYMPCAPRDVMCGQLQCQWGRSQPLLGSVQDRLSEVLEANGTQLNCSWVDLDLGNDVAQPLLALPGTACGPGLVCIGHRCQPVDLLGAQECRRKCHGHGVCDSSGHCRCEEGWAPPDCMTQLKATSSLTTGLLLSLLLLLVLVLLGASYWHRARLHQRLCQLKGSSCQYRAPQSCPPERPGPPQRAQQMTGTKQASVVSFPVPPSRPLPPNPVPKKLQAALADRSNPPTRPLPADPVVRRPKSQGPTKPPPPRKPLPANPQGQHPPGDLPGPGDGSLPLVVPSRPAPPPPAASSLYL.

The N-terminal stretch at 1–17 (MRLALLWALGLLGAGSP) is a signal peptide. Positions 18–45 (RPSPPLPNIGGTEEEQQASPERTLSGSM) are disordered. Residues 18–207 (RPSPPLPNIG…EQHHAHRLKR (190 aa)) constitute a propeptide that is removed on maturation. Positions 34–45 (QASPERTLSGSM) are enriched in polar residues. The Cysteine switch motif lies at 177 to 184 (HTCAPSWH). Residue C179 coordinates Zn(2+). The Extracellular portion of the chain corresponds to 208 to 696 (DVVTETKIVE…TQLKATSSLT (489 aa)). One can recognise a Peptidase M12B domain in the interval 214–415 (KIVELVIVAD…GMGSCLFERQ (202 aa)). The N-linked (GlcNAc...) asparagine glycan is linked to N238. 4 cysteine pairs are disulfide-bonded: C324-C410, C366-C394, C368-C377, and C481-C501. Zn(2+) is bound at residue H349. Residue E350 is part of the active site. H353 and H359 together coordinate Zn(2+). N390 and N393 each carry an N-linked (GlcNAc...) asparagine glycan. The 88-residue stretch at 422–509 (SSLCGNMFVD…QCPSDIRLGD (88 aa)) folds into the Disintegrin domain. N-linked (GlcNAc...) asparagine glycosylation is found at N607 and N612. Cystine bridges form between C658–C668, C662–C674, and C676–C685. The region spanning 658–686 (CRRKCHGHGVCDSSGHCRCEEGWAPPDCM) is the EGF-like domain. A helical membrane pass occupies residues 697-717 (TGLLLSLLLLLVLVLLGASYW). A phosphotyrosine; by HCK and LCK mark is found at Y716 and Y736. Topologically, residues 718–864 (HRARLHQRLC…PPPAASSLYL (147 aa)) are cytoplasmic. The tract at residues 736–864 (YRAPQSCPPE…PPPAASSLYL (129 aa)) is disordered. Over residues 741 to 750 (SCPPERPGPP) the composition is skewed to pro residues. Over residues 752–762 (RAQQMTGTKQA) the composition is skewed to polar residues. 2 stretches are compositionally biased toward pro residues: residues 768–780 (PVPP…PNPV) and 814–825 (TKPPPPRKPLPA). 2 short sequence motifs (SH3-binding) span residues 816-822 (PPPPRKP) and 851-857 (RPAPPPP).

Interacts specifically with Src family protein-tyrosine kinases (PTKs). Interacts with ITAGV-ITGB3 (vitronectin receptor). Interacts with SH3GL2 and SNX9; this interaction occurs preferentially with ADAM15 precursor, rather than the processed form, suggesting it occurs in a secretory pathway compartment prior to the medial Golgi. Interacts with ITAG9-ITGB1. Interacts with SH3PXD2A. Interacts with ITAGV-ITGB1. Interacts with GRB2, HCK, ITSN1, ITSN2, LYN, MAPK1, MAPK3, NCF1, NCK1, nephrocystin, PTK6, SNX33, LCK and SRC. The cofactor is Zn(2+). In terms of processing, the precursor is cleaved by a furin endopeptidase. An additional membrane proximal site of cleavage affects a small percentage of the proteins and results in disulfide-linked fragments. The prodomain is apparently cleaved in several positions that are N-terminal of the furin cleavage site. May be partially sialylated. Post-translationally, phosphorylation increases association with PTKs. Expressed moderately in pericytes of retina. Expressed in testis and in spermatozoa from the caput, corpus, and cauda epididymis, as well as in non-capacitated and acrosome-reacted sperm (at protein level). Highly expressed in heart, brain, lung, and kidney. Expressed at lower levels in spleen, liver, testis and muscle.

It is found in the endomembrane system. The protein localises to the cell junction. The protein resides in the adherens junction. It localises to the cell projection. Its subcellular location is the cilium. It is found in the flagellum. The protein localises to the cytoplasmic vesicle. The protein resides in the secretory vesicle. It localises to the acrosome. Its function is as follows. Active metalloproteinase with gelatinolytic and collagenolytic activity. Plays a role in the wound healing process. Mediates both heterotypic intraepithelial cell/T-cell interactions and homotypic T-cell aggregation. Inhibits beta-1 integrin-mediated cell adhesion and migration of airway smooth muscle cells. Suppresses cell motility on or towards fibronectin possibly by driving alpha-v/beta-1 integrin (ITAGV-ITGB1) cell surface expression via ERK1/2 inactivation. Cleaves E-cadherin in response to growth factor deprivation. Plays a role in glomerular cell migration. Plays a role in pathological neovascularization. May play a role in cartilage remodeling. May be proteolytically processed, during sperm epididymal maturation and the acrosome reaction. May play a role in sperm-egg binding through its disintegrin domain. Interactions with egg membrane could be mediated via binding between the disintegrin-like domain to one or more integrin receptors on the egg. This Mus musculus (Mouse) protein is Disintegrin and metalloproteinase domain-containing protein 15 (Adam15).